Here is a 776-residue protein sequence, read N- to C-terminus: LPS-assembly protein LptD (776 aa).

Positions 1–24 (MQHFSRTFLAASIATALFAPYAQA) are cleaved as a signal peptide.

Belongs to the LptD family. As to quaternary structure, component of the lipopolysaccharide transport and assembly complex. Interacts with LptE and LptA.

The protein resides in the cell outer membrane. Together with LptE, is involved in the assembly of lipopolysaccharide (LPS) at the surface of the outer membrane. This is LPS-assembly protein LptD from Vibrio vulnificus (strain YJ016).